A 318-amino-acid chain; its full sequence is Homeobox protein Nkx-2.5 (318 aa).

The segment at residues 137–196 (RRKPRVLFSQAQVYELERRFKQQRYLSAPERDQLASVLKLTSTQVKIWFQNRRYKCKRQR) is a DNA-binding region (homeobox).

The protein belongs to the NK-2 homeobox family. In terms of assembly, homodimer (via the homeobox); binds DNA as homodimer. Interacts (via the homeobox) with TBX5 (via the T-box); this complex binds DNA. Interacts with HIPK1 and HIPK2, but not HIPK3. Interacts with the C-terminal zinc finger of GATA4 through its homeobox domain. Also interacts with JARID2 which represses its ability to activate transcription of ANF. Interacts with FBLIM1. Interacts with TBX18. Interacts with histone methyltransferase NSD2 (via HMG box). Interacts with NEDD9. Interacts with TBX1. In terms of tissue distribution, predominantly in the adult and embryonic heart, and to a lesser extent in lingual muscle, spleen and stomach.

The protein localises to the nucleus. Functionally, transcription factor required for the development of the heart and the spleen. During heart development, acts as a transcriptional activator of NPPA/ANF in cooperation with GATA4. May cooperate with TBX2 to negatively modulate expression of NPPA/ANF in the atrioventricular canal. Binds to the core DNA motif of NPPA promoter. Together with PBX1, required for spleen development through a mechanism that involves CDKN2B repression. Positively regulates transcription of genes such as COL3A1 and MMP2, resulting in increased pulmonary endothelial fibrosis in response to hypoxia. This Mus musculus (Mouse) protein is Homeobox protein Nkx-2.5 (Nkx2-5).